A 519-amino-acid polypeptide reads, in one-letter code: 2,3-bisphosphoglycerate-independent phosphoglycerate mutase (519 aa).

Mn(2+) is bound by residues Asp18 and Ser68. The Phosphoserine intermediate role is filled by Ser68. Substrate is bound by residues His129, 159-160, Arg191, Arg197, 267-270, and Lys341; these read RD and RADR. Residues Asp408, His412, Asp449, His450, and His468 each contribute to the Mn(2+) site.

Belongs to the BPG-independent phosphoglycerate mutase family. As to quaternary structure, monomer. Mn(2+) is required as a cofactor.

The catalysed reaction is (2R)-2-phosphoglycerate = (2R)-3-phosphoglycerate. The protein operates within carbohydrate degradation; glycolysis; pyruvate from D-glyceraldehyde 3-phosphate: step 3/5. Catalyzes the interconversion of 2-phosphoglycerate and 3-phosphoglycerate. The polypeptide is 2,3-bisphosphoglycerate-independent phosphoglycerate mutase (Coxiella burnetii (strain Dugway 5J108-111)).